Reading from the N-terminus, the 478-residue chain is Glutamyl-tRNA(Gln) amidotransferase subunit A 2 (478 aa).

Catalysis depends on charge relay system residues Lys79 and Ser154. The active-site Acyl-ester intermediate is Ser178.

This sequence belongs to the amidase family. GatA subfamily. Heterotrimer of A, B and C subunits.

The catalysed reaction is L-glutamyl-tRNA(Gln) + L-glutamine + ATP + H2O = L-glutaminyl-tRNA(Gln) + L-glutamate + ADP + phosphate + H(+). In terms of biological role, allows the formation of correctly charged Gln-tRNA(Gln) through the transamidation of misacylated Glu-tRNA(Gln) in organisms which lack glutaminyl-tRNA synthetase. The reaction takes place in the presence of glutamine and ATP through an activated gamma-phospho-Glu-tRNA(Gln). The chain is Glutamyl-tRNA(Gln) amidotransferase subunit A 2 (gatA2) from Clostridium acetobutylicum (strain ATCC 824 / DSM 792 / JCM 1419 / IAM 19013 / LMG 5710 / NBRC 13948 / NRRL B-527 / VKM B-1787 / 2291 / W).